Reading from the N-terminus, the 130-residue chain is Small ribosomal subunit protein uS11 (130 aa).

The protein belongs to the universal ribosomal protein uS11 family. In terms of assembly, part of the 30S ribosomal subunit. Interacts with proteins S7 and S18. Binds to IF-3.

Functionally, located on the platform of the 30S subunit, it bridges several disparate RNA helices of the 16S rRNA. Forms part of the Shine-Dalgarno cleft in the 70S ribosome. In Caldicellulosiruptor bescii (strain ATCC BAA-1888 / DSM 6725 / KCTC 15123 / Z-1320) (Anaerocellum thermophilum), this protein is Small ribosomal subunit protein uS11.